Here is a 279-residue protein sequence, read N- to C-terminus: Stathmin domain-containing protein 1 (279 aa).

2 disordered regions span residues 1-110 (MGCG…ERPK) and 178-254 (AAEE…VAQM). Glycine 2 carries N-myristoyl glycine lipidation. Basic and acidic residues predominate over residues 22 to 32 (KGWEEGSKADV). Polar residues predominate over residues 34 to 45 (VTSSKENCSPQT). The 128-residue stretch at 121–248 (QGIIQSRSKV…GEPLKRKKSE (128 aa)) folds into the SLD domain. 2 stretches are compositionally biased toward basic and acidic residues: residues 178–191 (AAEE…EEIR) and 232–242 (EKSDVQEGEPL).

The chain is Stathmin domain-containing protein 1 (Stmnd1) from Mus musculus (Mouse).